A 451-amino-acid polypeptide reads, in one-letter code: Probable NADH dehydrogenase (451 aa).

41-71 (KLIILGCGWGSYSFLKNLNSIKYDITVISPR) provides a ligand contact to FAD. Residue 199 to 236 (LSFVIVGGGATGIEFTSELNDFFSEDLSRLFPFVPVNE) participates in NAD(+) binding.

Belongs to the NADH dehydrogenase family. FAD serves as cofactor.

It catalyses the reaction a ubiquinone + NADH + 5 H(+)(in) = a ubiquinol + NAD(+) + 4 H(+)(out). The chain is Probable NADH dehydrogenase from Dictyostelium discoideum (Social amoeba).